Consider the following 317-residue polypeptide: Melanocyte-stimulating hormone receptor (317 aa).

The Extracellular portion of the chain corresponds to 1–37; it reads MPVQGSQRRLLGSLNSTPTATPRLGLAANQTGARCLE. Asn29 is a glycosylation site (N-linked (GlcNAc...) asparagine). A helical membrane pass occupies residues 38–63; sequence VSIPDGLFLSLGLVSLVENVLVVVAI. Residues 64-72 are Cytoplasmic-facing; sequence ARNRNLHSP. A helical membrane pass occupies residues 73–93; it reads MYCFICCLALSDLLVSGSNML. Residues 94–118 lie on the Extracellular side of the membrane; the sequence is ETAVILLLEAGALAARAAVVQQLDN. The helical transmembrane segment at 119–140 threads the bilayer; the sequence is VIDVITCSSMLSSLCFLGAIAV. Topologically, residues 141–163 are cytoplasmic; that stretch reads DRYISIFYALRYHSIVTLRRARR. Residues 164–183 form a helical membrane-spanning segment; that stretch reads VVAAIWVASVLFSTLFIAYC. Residues 184–191 are Extracellular-facing; that stretch reads DHAAVLLS. The chain crosses the membrane as a helical span at residues 192–211; sequence LVVFFLAMLVLMAVLYVHML. The Cytoplasmic segment spans residues 212 to 240; sequence ARACQHAQGIAQLHKRQRPAHQGVGLKGA. Residues 241 to 266 traverse the membrane as a helical segment; sequence ATLTILLGIFFLCWGPFFLHLTLIVL. At 267-279 the chain is on the extracellular side; that stretch reads CPQHPTCSCIFKN. Residues 280-300 form a helical membrane-spanning segment; the sequence is FNLFLTLIICNAIIDPLIYAF. At 301–317 the chain is on the cytoplasmic side; it reads RSQELRRTLKKVLLCSW. Cys315 is lipidated: S-palmitoyl cysteine.

It belongs to the G-protein coupled receptor 1 family. Interacts with MGRN1, but does not undergo MGRN1-mediated ubiquitination; this interaction competes with GNAS-binding and thus inhibits agonist-induced cAMP production. Interacts with OPN3; the interaction results in a decrease in MC1R-mediated cAMP signaling and ultimately a decrease in melanin production in melanocytes.

It localises to the cell membrane. Receptor for MSH (alpha, beta and gamma) and ACTH. The activity of this receptor is mediated by G proteins which activate adenylate cyclase. Mediates melanogenesis, the production of eumelanin (black/brown) and phaeomelanin (red/yellow), via regulation of cAMP signaling in melanocytes. The protein is Melanocyte-stimulating hormone receptor (MC1R) of Trachypithecus auratus (Javan langur).